A 56-amino-acid polypeptide reads, in one-letter code: Large ribosomal subunit protein bL33 (56 aa).

This sequence belongs to the bacterial ribosomal protein bL33 family.

The sequence is that of Large ribosomal subunit protein bL33 from Ehrlichia canis (strain Jake).